A 139-amino-acid chain; its full sequence is Large ribosomal subunit protein uL16 (139 aa).

This sequence belongs to the universal ribosomal protein uL16 family. In terms of assembly, part of the 50S ribosomal subunit.

Its function is as follows. Binds 23S rRNA and is also seen to make contacts with the A and possibly P site tRNAs. The sequence is that of Large ribosomal subunit protein uL16 from Treponema pallidum (strain Nichols).